We begin with the raw amino-acid sequence, 713 residues long: Undecaprenyl-diphosphooligosaccharide--protein glycotransferase (713 aa).

The Cytoplasmic segment spans residues 1–11 (MLKKEYLKNPY). Residues 12–35 (LVLFAMIILAYVFSVLCRFYWIWW) form a helical membrane-spanning segment. The Periplasmic segment spans residues 36-96 (ASEFNEYFFN…YWLYKITPFS (61 aa)). Positions 52 to 54 (SND) match the DXD motif 1 motif. Position 54 (Asp-54) interacts with Mn(2+). A helical membrane pass occupies residues 97-122 (FESIILYMSTFLSSLVVIPIILLANE). Topologically, residues 123 to 125 (YKR) are cytoplasmic. A helical transmembrane segment spans residues 126 to 144 (PLMGFVAALLASVANSYYN). The Periplasmic portion of the chain corresponds to 145–152 (RTMSGYYD). Asp-152 serves as a coordination point for Mn(2+). The DXD motif 2 signature appears at 152-154 (DTD). A helical transmembrane segment spans residues 153–174 (TDMLVIVLPMFILFFMVRMILK). Over 175 to 176 (KD) the chain is Cytoplasmic. Residues 177–192 (FFSLIALPLFIGIYLW) traverse the membrane as a helical segment. At 193–197 (WYPSS) the chain is on the periplasmic side. 194–196 (YPS) lines the [alpha-D-GalNAc-(1-&gt;4)]2-[beta-D-Glc-(1-&gt;3)]-[alpha-D-GalNAc-(1-&gt;4)]2-alpha-D-GalNAc-(1-&gt;3)-alpha-D-diNAcBac-tri-trans,hepta-cis-undecaprenyl diphosphate pocket. The chain crosses the membrane as a helical span at residues 198 to 215 (YTLNVALIGLFLIYTLIF). Residues 216–220 (HRKEK) lie on the Cytoplasmic side of the membrane. The chain crosses the membrane as a helical span at residues 221–233 (IFYIAVILSSLTL). Residues 234 to 237 (SNIA) lie on the Periplasmic side of the membrane. Residues 238-254 (WFYQSAIIVILFALFAL) form a helical membrane-spanning segment. Topologically, residues 255 to 260 (EQKRLN) are cytoplasmic. The chain crosses the membrane as a helical span at residues 261–278 (FMIIGILGSATLIFLILS). Over 279–324 (GGVDPILYQLKFYIFRNDESANLTQGFMYFNVNQTIQEVENVDFSE) the chain is Periplasmic. Tyr-291 contacts [alpha-D-GalNAc-(1-&gt;4)]2-[beta-D-Glc-(1-&gt;3)]-[alpha-D-GalNAc-(1-&gt;4)]2-alpha-D-GalNAc-(1-&gt;3)-alpha-D-diNAcBac-tri-trans,hepta-cis-undecaprenyl diphosphate. The TIXE motif signature appears at 313–316 (TIQE). Residue Glu-316 participates in Mn(2+) binding. The helical transmembrane segment at 325–347 (FMRRISGSEIVFLFSLFGFVWLL) threads the bilayer. Residues 348-352 (RKHKS) lie on the Cytoplasmic side of the membrane. A helical transmembrane segment spans residues 353–369 (MIMALPILVLGFLALKG). Topologically, residues 370 to 373 (GLRF) are periplasmic. Arg-372 provides a ligand contact to [alpha-D-GalNAc-(1-&gt;4)]2-[beta-D-Glc-(1-&gt;3)]-[alpha-D-GalNAc-(1-&gt;4)]2-alpha-D-GalNAc-(1-&gt;3)-alpha-D-diNAcBac-tri-trans,hepta-cis-undecaprenyl diphosphate. The helical transmembrane segment at 374 to 396 (TIYSVPVMALGFGFLLSEFKAIL) threads the bilayer. At 397 to 406 (VKKYSQLTSN) the chain is on the cytoplasmic side. Residues 407 to 427 (VCIVFATILTLAPVFIHIYNY) form a helical membrane-spanning segment. Residues 428 to 713 (KAPTVFSQNE…RDAKVFKLKI (286 aa)) are Periplasmic-facing. Residues 457–459 (WWD) are interacts with target acceptor peptide in protein substrate. The WWDYG motif signature appears at 457–461 (WWDYG). Tyr-462 is a binding site for [alpha-D-GalNAc-(1-&gt;4)]2-[beta-D-Glc-(1-&gt;3)]-[alpha-D-GalNAc-(1-&gt;4)]2-alpha-D-GalNAc-(1-&gt;3)-alpha-D-diNAcBac-tri-trans,hepta-cis-undecaprenyl diphosphate. The N-linked (DATDGlc) asparagine glycan is linked to Asn-534. The MI motif motif lies at 568 to 575 (MSLIFSTV).

It belongs to the STT3 family. The cofactor is Mg(2+). Mn(2+) is required as a cofactor.

It is found in the cell inner membrane. It catalyses the reaction tritrans,heptacis-undecaprenyl diphosphooligosaccharide + [protein]-L-asparagine = tritrans,heptacis-undecaprenyl diphosphate + a glycoprotein with the oligosaccharide chain attached by N-beta-D-glycosyl linkage to protein L-asparagine.. It functions in the pathway protein modification; protein glycosylation. Its function is as follows. Oligosaccharyltransferase that catalyzes the transfer of a preassembled heptasaccharide from a lipid donor to an asparagine residue in nascent polypeptide chains, affording a beta-linked glycan to the asparagine side chain of target proteins. Oligosaccharyl transferase (OST) that catalyzes the initial transfer of a defined glycan (GalNAc(2)GlcGalNAc(3)Bac(NAc)(2) in eubacteria, where Bac(NAc)(2) is di-N-acetyl bacillosamine) from the lipid carrier undecaprenol-pyrophosphate to an asparagine residue within an Asp/Glu-Asn-X-Ser/Thr consensus motif in nascent polypeptide chains, the first step in protein N-glycosylation. This chain is Undecaprenyl-diphosphooligosaccharide--protein glycotransferase (pglB), found in Campylobacter jejuni (strain RM1221).